Reading from the N-terminus, the 153-residue chain is MPLLLSGRVFRRDLDACGCLAMHVPLEGGSETRLLRRLRAAGYRTQLSSARGLGDPEVFLFELHGIRPPHLGHQSVGRNGAVGEVQQVMPQLAELFVDNAPVVLWLLEGQVLSRSELLALCDLCKRESRLRVVVEMGGARSLNWQPMSTLLGD.

Belongs to the complex I NdhN subunit family. In terms of assembly, NDH-1 can be composed of about 15 different subunits; different subcomplexes with different compositions have been identified which probably have different functions.

The protein localises to the cellular thylakoid membrane. The catalysed reaction is a plastoquinone + NADH + (n+1) H(+)(in) = a plastoquinol + NAD(+) + n H(+)(out). It carries out the reaction a plastoquinone + NADPH + (n+1) H(+)(in) = a plastoquinol + NADP(+) + n H(+)(out). In terms of biological role, NDH-1 shuttles electrons from an unknown electron donor, via FMN and iron-sulfur (Fe-S) centers, to quinones in the respiratory and/or the photosynthetic chain. The immediate electron acceptor for the enzyme in this species is believed to be plastoquinone. Couples the redox reaction to proton translocation, and thus conserves the redox energy in a proton gradient. Cyanobacterial NDH-1 also plays a role in inorganic carbon-concentration. The sequence is that of NAD(P)H-quinone oxidoreductase subunit N from Prochlorococcus marinus (strain MIT 9313).